The chain runs to 549 residues: Glucose-6-phosphate isomerase (549 aa).

Catalysis depends on Glu-355, which acts as the Proton donor. Catalysis depends on residues His-386 and Lys-514.

Belongs to the GPI family.

It is found in the cytoplasm. It carries out the reaction alpha-D-glucose 6-phosphate = beta-D-fructose 6-phosphate. It participates in carbohydrate biosynthesis; gluconeogenesis. Its pathway is carbohydrate degradation; glycolysis; D-glyceraldehyde 3-phosphate and glycerone phosphate from D-glucose: step 2/4. Its function is as follows. Catalyzes the reversible isomerization of glucose-6-phosphate to fructose-6-phosphate. The protein is Glucose-6-phosphate isomerase of Klebsiella pneumoniae subsp. pneumoniae (strain ATCC 700721 / MGH 78578).